A 75-amino-acid chain; its full sequence is Small ribosomal subunit protein bS18 (75 aa).

This sequence belongs to the bacterial ribosomal protein bS18 family. In terms of assembly, part of the 30S ribosomal subunit. Forms a tight heterodimer with protein bS6.

In terms of biological role, binds as a heterodimer with protein bS6 to the central domain of the 16S rRNA, where it helps stabilize the platform of the 30S subunit. This chain is Small ribosomal subunit protein bS18, found in Wigglesworthia glossinidia brevipalpis.